The primary structure comprises 562 residues: F-box and WD repeat domain-containing 11-A (562 aa).

The interval 87–136 (GSFDKEKDLCIQLFDQWSESDQVEFVEHLIARMCHYQHGHINSYLKPMLQ) is homodimerization domain D. The F-box domain maps to 149-187 (DHIAENILSFLDARSLCSAELVCREWQRVISDGMLWKKL). 7 WD repeats span residues 256 to 295 (RSEN…CLKV), 296 to 335 (LTGH…VLNT), 336 to 375 (LIHH…DISL), 379 to 418 (LVGH…FVRT), 419 to 458 (LNGH…CLRV), 459 to 491 (LEGH…WDLQ), and 508 to 538 (LVEH…LIWD).

Self-associates. Component of the SCF(FBXW11) complex.

Its subcellular location is the cytoplasm. The protein resides in the nucleus. It functions in the pathway protein modification; protein ubiquitination. Functionally, substrate recognition component of a SCF (SKP1-CUL1-F-box protein) E3 ubiquitin-protein ligase complex which mediates the ubiquitination and subsequent proteasomal degradation of target proteins. Probably recognizes and binds to phosphorylated target proteins: the interaction with substrates requires the phosphorylation of the two serine residues in the substrates' destruction motif D-S-G-X(2,3,4)-S. SCF(FBXW11) mediates the ubiquitination of phosphorylated CTNNB1 and participates in Wnt signaling regulation. Participates in Wnt signaling regulation, and plays a role in eye and jaw development. SCF(FBXW11) plays a key role in NF-kappa-B activation by mediating ubiquitination of phosphorylated NFKBIA, leading to its degradation by the proteasome, thereby allowing the associated NF-kappa-B complex to translocate into the nucleus and to activate transcription. In Danio rerio (Zebrafish), this protein is F-box and WD repeat domain-containing 11-A.